We begin with the raw amino-acid sequence, 161 residues long: Ferredoxin/F(420)H(2)-dependent CoB-CoM heterodisulfide reductase subunit C (161 aa).

2 4Fe-4S ferredoxin-type domains span residues 10–40 (KAEGLDLLSCMHCGICTGSCPSGRHTGLNTR) and 51–82 (AAVLSDYDLWLCTTCYTCQERCPRGIPITDAI). Cysteine 19, cysteine 22, cysteine 25, cysteine 29, cysteine 62, cysteine 65, cysteine 68, and cysteine 72 together coordinate [4Fe-4S] cluster.

It belongs to the HdrC family. As to quaternary structure, the ferredoxin/F(420)H(2)-dependent CoB-CoM heterodisulfide reductase is composed of three subunits; HdrA2, HdrB2 and HdrC2. The cofactor is [4Fe-4S] cluster.

The protein resides in the cytoplasm. It carries out the reaction coenzyme B + coenzyme M + 2 oxidized [2Fe-2S]-[ferredoxin] = coenzyme M-coenzyme B heterodisulfide + 2 reduced [2Fe-2S]-[ferredoxin] + 2 H(+). The catalysed reaction is coenzyme B + 2 oxidized coenzyme F420-(gamma-L-Glu)(n) + coenzyme M + 2 reduced [2Fe-2S]-[ferredoxin] + 4 H(+) = coenzyme M-coenzyme B heterodisulfide + 2 reduced coenzyme F420-(gamma-L-Glu)(n) + 2 oxidized [2Fe-2S]-[ferredoxin]. It functions in the pathway cofactor metabolism; coenzyme M-coenzyme B heterodisulfide reduction; coenzyme B and coenzyme M from coenzyme M-coenzyme B heterodisulfide: step 1/1. In terms of biological role, part of a complex that catalyzes the reversible reduction of CoM-S-S-CoB to the thiol-coenzymes H-S-CoM (coenzyme M) and H-S-CoB (coenzyme B). Catalyzes the transfer of electrons from ferredoxin to CoM-S-S-CoB during methanogenesis from acetate. Electrons transfer from ferredoxin to CoM-S-S-CoB via HdrA2, HdrC2 and HdrB2. In addition, the complex can use electron bifurcation to direct electron pairs from reduced coenzyme F420 towards the reduction of both ferredoxin and CoB-CoM heterodisulfide. This activity may take place during Fe(III)-dependent anaerobic methane oxidation. The sequence is that of Ferredoxin/F(420)H(2)-dependent CoB-CoM heterodisulfide reductase subunit C from Methanosarcina acetivorans (strain ATCC 35395 / DSM 2834 / JCM 12185 / C2A).